A 295-amino-acid chain; its full sequence is Tyrosine recombinase XerD (295 aa).

The 85-residue stretch at 1-85 folds into the Core-binding (CB) domain; that stretch reads METIIEEYLR…TIRSFHQFAI (85 aa). The Tyr recombinase domain occupies 106-289; it reads KLPDVLNVDE…SKSQIRKMYN (184 aa). Catalysis depends on residues Arg-146, Lys-170, His-241, Arg-244, and His-267. The O-(3'-phospho-DNA)-tyrosine intermediate role is filled by Tyr-276.

Belongs to the 'phage' integrase family. XerD subfamily. In terms of assembly, forms a cyclic heterotetrameric complex composed of two molecules of XerC and two molecules of XerD.

It localises to the cytoplasm. Site-specific tyrosine recombinase, which acts by catalyzing the cutting and rejoining of the recombining DNA molecules. The XerC-XerD complex is essential to convert dimers of the bacterial chromosome into monomers to permit their segregation at cell division. It also contributes to the segregational stability of plasmids. This Staphylococcus aureus (strain COL) protein is Tyrosine recombinase XerD.